Consider the following 201-residue polypeptide: Cerebellin-4 (201 aa).

A signal peptide spans 1–27; it reads MGSGRRALSAVPAVLLVLTLPGLPVWA. N-linked (GlcNAc...) asparagine glycans are attached at residues Asn29 and Asn88. Residues 66 to 201 form the C1q domain; it reads AANSKVAFSA…TFSGFLVFPL (136 aa).

As to quaternary structure, homohexamer; disulfide-linked homotrimers. The trimers are assembled via the globular C1q domains. The trimers associate via N-terminal cysteine residues to form disulfide-linked hexamers. May form oligomers with CBLN1, CBLN2 and CBLN3 prior to secretion. Strongly interacts with DCC in a NTN1-displaceable fashion. Weakly binds to NRXN1 and NRXN2 long and short isoforms produced by alternative promoter usage. Interaction with NRXN3 short isoform is hardly detectable; no interaction at all with NRXN3 long isoform. In terms of processing, sialoglycoprotein.

Its subcellular location is the secreted. The protein resides in the synapse. In terms of biological role, acts as a synaptic organizer in specific subsets of neurons in the brain. Essential for the formation and maintenance of inhibitory GABAergic synapses. Promotes the development of dendrite-targeting inhibitory GABAergic synapses made by somatostatin-positive interneurons. May contribute to the function of ventral medial habenula region of the brain implicated in the regulation of anxiety-related behaviors. May play a role in CBLN3 export from the endoplasmic reticulum and secretion. This chain is Cerebellin-4 (CBLN4), found in Homo sapiens (Human).